Reading from the N-terminus, the 211-residue chain is Large ribosomal subunit protein bL25 (211 aa).

The protein belongs to the bacterial ribosomal protein bL25 family. CTC subfamily. In terms of assembly, part of the 50S ribosomal subunit; part of the 5S rRNA/L5/L18/L25 subcomplex. Contacts the 5S rRNA. Binds to the 5S rRNA independently of L5 and L18.

Functionally, this is one of the proteins that binds to the 5S RNA in the ribosome where it forms part of the central protuberance. The chain is Large ribosomal subunit protein bL25 from Xanthomonas axonopodis pv. citri (strain 306).